The primary structure comprises 221 residues: Large ribosomal subunit protein uL16y (221 aa).

It belongs to the universal ribosomal protein uL16 family. In terms of assembly, component of the small ribosomal subunit. Mature ribosomes consist of a small (40S) and a large (60S) subunit. The 40S subunit contains about 33 different proteins and 1 molecule of RNA (18S). The 60S subunit contains about 49 different proteins and 3 molecules of RNA (25S, 5.8S and 5S).

This is Large ribosomal subunit protein uL16y (RPL10B) from Arabidopsis thaliana (Mouse-ear cress).